Consider the following 238-residue polypeptide: uncharacterized protein (238 aa).

Transmembrane regions (helical) follow at residues 15–37 (FGAL…VLLP), 50–69 (ARAG…CGTL), 79–96 (LPFH…LYFI), 101–118 (IFFN…VAVL), 128–150 (ILYA…FSLL), 163–183 (CAVL…RRLG), and 203–225 (FFVY…YLPF).

Its subcellular location is the cell membrane. This is an uncharacterized protein from Treponema pallidum (strain Nichols).